We begin with the raw amino-acid sequence, 485 residues long: Ribulose bisphosphate carboxylase large chain (485 aa).

Positions 1–2 are excised as a propeptide; it reads MS. Position 3 is an N-acetylproline (proline 3). Position 14 is an N6,N6,N6-trimethyllysine (lysine 14). Substrate is bound by residues asparagine 123 and threonine 173. Catalysis depends on lysine 175, which acts as the Proton acceptor. Lysine 177 provides a ligand contact to substrate. Mg(2+)-binding residues include lysine 201, aspartate 203, and glutamate 204. Lysine 201 is subject to N6-carboxylysine. Histidine 294 (proton acceptor) is an active-site residue. The substrate site is built by arginine 295, histidine 327, and serine 379.

Belongs to the RuBisCO large chain family. Type I subfamily. In terms of assembly, heterohexadecamer of 8 large chains and 8 small chains; disulfide-linked. The disulfide link is formed within the large subunit homodimers. Mg(2+) serves as cofactor. The disulfide bond which can form in the large chain dimeric partners within the hexadecamer appears to be associated with oxidative stress and protein turnover.

It localises to the plastid. Its subcellular location is the chloroplast. It catalyses the reaction 2 (2R)-3-phosphoglycerate + 2 H(+) = D-ribulose 1,5-bisphosphate + CO2 + H2O. The enzyme catalyses D-ribulose 1,5-bisphosphate + O2 = 2-phosphoglycolate + (2R)-3-phosphoglycerate + 2 H(+). Its function is as follows. RuBisCO catalyzes two reactions: the carboxylation of D-ribulose 1,5-bisphosphate, the primary event in carbon dioxide fixation, as well as the oxidative fragmentation of the pentose substrate in the photorespiration process. Both reactions occur simultaneously and in competition at the same active site. This Flaveria bidentis (Coastal plain yellowtops) protein is Ribulose bisphosphate carboxylase large chain.